The primary structure comprises 63 residues: Conotoxin PnMRCL-0111 (63 aa).

The signal sequence occupies residues 1–22 (MHCLSVFVILLLLTASAPSVDA). The propeptide occupies 23-50 (QPKTEDDVPLSSFHDDLQRTVRTLLDIR). Tryptophan amide is present on tryptophan 62.

It belongs to the conotoxin T superfamily. In terms of processing, contains 2 disulfide bonds that can be either 'C1-C3, C2-C4' or 'C1-C4, C2-C3', since these disulfide connectivities have been observed for conotoxins with cysteine framework V (for examples, see AC P0DQQ7 and AC P81755). Expressed by the venom duct.

It localises to the secreted. This chain is Conotoxin PnMRCL-0111, found in Conus pennaceus (Feathered cone).